A 31-amino-acid chain; its full sequence is MPTITSYFGFLLAALTITSALFIGLSKIGLI.

The helical transmembrane segment at 4-24 threads the bilayer; the sequence is ITSYFGFLLAALTITSALFIG.

This sequence belongs to the PetL family. The 4 large subunits of the cytochrome b6-f complex are cytochrome b6, subunit IV (17 kDa polypeptide, PetD), cytochrome f and the Rieske protein, while the 4 small subunits are PetG, PetL, PetM and PetN. The complex functions as a dimer.

It is found in the plastid. The protein resides in the chloroplast thylakoid membrane. In terms of biological role, component of the cytochrome b6-f complex, which mediates electron transfer between photosystem II (PSII) and photosystem I (PSI), cyclic electron flow around PSI, and state transitions. PetL is important for photoautotrophic growth as well as for electron transfer efficiency and stability of the cytochrome b6-f complex. The protein is Cytochrome b6-f complex subunit 6 of Citrus sinensis (Sweet orange).